We begin with the raw amino-acid sequence, 206 residues long: N-(5'-phosphoribosyl)anthranilate isomerase (206 aa).

The protein belongs to the TrpF family.

The catalysed reaction is N-(5-phospho-beta-D-ribosyl)anthranilate = 1-(2-carboxyphenylamino)-1-deoxy-D-ribulose 5-phosphate. It participates in amino-acid biosynthesis; L-tryptophan biosynthesis; L-tryptophan from chorismate: step 3/5. This is N-(5'-phosphoribosyl)anthranilate isomerase from Pseudomonas putida (strain GB-1).